The following is a 173-amino-acid chain: Adenine phosphoribosyltransferase (173 aa).

It belongs to the purine/pyrimidine phosphoribosyltransferase family. Homodimer.

It is found in the cytoplasm. It carries out the reaction AMP + diphosphate = 5-phospho-alpha-D-ribose 1-diphosphate + adenine. The protein operates within purine metabolism; AMP biosynthesis via salvage pathway; AMP from adenine: step 1/1. Functionally, catalyzes a salvage reaction resulting in the formation of AMP, that is energically less costly than de novo synthesis. The polypeptide is Adenine phosphoribosyltransferase (Thermoanaerobacter pseudethanolicus (strain ATCC 33223 / 39E) (Clostridium thermohydrosulfuricum)).